We begin with the raw amino-acid sequence, 323 residues long: Acetyl-coenzyme A carboxylase carboxyl transferase subunit alpha (323 aa).

Residues 39-293 enclose the CoA carboxyltransferase C-terminal domain; the sequence is RLSKKSQQLT…RRALGDSLRQ (255 aa).

It belongs to the AccA family. Acetyl-CoA carboxylase is a heterohexamer composed of biotin carboxyl carrier protein (AccB), biotin carboxylase (AccC) and two subunits each of ACCase subunit alpha (AccA) and ACCase subunit beta (AccD).

The protein resides in the cytoplasm. It catalyses the reaction N(6)-carboxybiotinyl-L-lysyl-[protein] + acetyl-CoA = N(6)-biotinyl-L-lysyl-[protein] + malonyl-CoA. It functions in the pathway lipid metabolism; malonyl-CoA biosynthesis; malonyl-CoA from acetyl-CoA: step 1/1. Functionally, component of the acetyl coenzyme A carboxylase (ACC) complex. First, biotin carboxylase catalyzes the carboxylation of biotin on its carrier protein (BCCP) and then the CO(2) group is transferred by the carboxyltransferase to acetyl-CoA to form malonyl-CoA. This Burkholderia pseudomallei (strain 1106a) protein is Acetyl-coenzyme A carboxylase carboxyl transferase subunit alpha.